The primary structure comprises 264 residues: L-aspartate dehydrogenase (264 aa).

Ala-120 and Asn-186 together coordinate NAD(+). The active site involves His-216.

This sequence belongs to the L-aspartate dehydrogenase family.

The catalysed reaction is L-aspartate + NADP(+) + H2O = oxaloacetate + NH4(+) + NADPH + H(+). It carries out the reaction L-aspartate + NAD(+) + H2O = oxaloacetate + NH4(+) + NADH + H(+). It functions in the pathway cofactor biosynthesis; NAD(+) biosynthesis; iminoaspartate from L-aspartate (dehydrogenase route): step 1/1. In terms of biological role, specifically catalyzes the NAD or NADP-dependent dehydrogenation of L-aspartate to iminoaspartate. This Serratia proteamaculans (strain 568) protein is L-aspartate dehydrogenase.